A 109-amino-acid chain; its full sequence is Nucleoid-associated protein Shal_1591 (109 aa).

The disordered stretch occupies residues 87–109; it reads NQKEKMAEVTGGMQLPPGMKMPF.

Belongs to the YbaB/EbfC family. Homodimer.

Its subcellular location is the cytoplasm. It is found in the nucleoid. Its function is as follows. Binds to DNA and alters its conformation. May be involved in regulation of gene expression, nucleoid organization and DNA protection. The chain is Nucleoid-associated protein Shal_1591 from Shewanella halifaxensis (strain HAW-EB4).